An 853-amino-acid chain; its full sequence is Probable inorganic carbon transporter subunit DabA (853 aa).

Positions 1 to 21 (MSHANSEETMMNTAVAHPSTS) are disordered. Over residues 7 to 21 (EETMMNTAVAHPSTS) the composition is skewed to polar residues. Zn(2+)-binding residues include Cys364, Asp366, His546, and Cys561.

It belongs to the inorganic carbon transporter (TC 9.A.2) DabA family. Forms a complex with DabB. It depends on Zn(2+) as a cofactor.

Its subcellular location is the cell inner membrane. Part of an energy-coupled inorganic carbon pump. In Methylovorus glucosotrophus (strain SIP3-4), this protein is Probable inorganic carbon transporter subunit DabA.